The sequence spans 464 residues: Leucine-rich repeat-containing protein 34 (464 aa).

The disordered stretch occupies residues 1–48 (MAAQPPRPVGERSMGSSREAARAPARSPAWASTQASTPGAALAVQRES). The segment covering 16–32 (SSREAARAPARSPAWAS) has biased composition (low complexity). 2 LRR repeats span residues 295–315 (SLRY…VYLA) and 323–345 (TLEV…LSET).

Interacts with NPM1 and NCL.

It is found in the nucleus. The protein resides in the nucleolus. Its subcellular location is the cytoplasm. Its function is as follows. Highly expressed in stem cells where it may be involved in regulation of pluripotency. In embryonic stem cells (ESCs), important for normal expression of the pluripotency regulators POU5F1/OCT4 and KLF4. Also important for expression of the ectodermal marker gene NES and the endodermal marker gene GATA4. Promotes stem cell proliferation in vitro. The polypeptide is Leucine-rich repeat-containing protein 34 (LRRC34) (Homo sapiens (Human)).